A 319-amino-acid chain; its full sequence is Acetyl-coenzyme A carboxylase carboxyl transferase subunit alpha (319 aa).

The CoA carboxyltransferase C-terminal domain maps to 38–292; it reads ALDKKAETLL…GKAIEMMLKE (255 aa).

Belongs to the AccA family. As to quaternary structure, acetyl-CoA carboxylase is a heterohexamer composed of biotin carboxyl carrier protein (AccB), biotin carboxylase (AccC) and two subunits each of ACCase subunit alpha (AccA) and ACCase subunit beta (AccD).

It is found in the cytoplasm. The enzyme catalyses N(6)-carboxybiotinyl-L-lysyl-[protein] + acetyl-CoA = N(6)-biotinyl-L-lysyl-[protein] + malonyl-CoA. The protein operates within lipid metabolism; malonyl-CoA biosynthesis; malonyl-CoA from acetyl-CoA: step 1/1. In terms of biological role, component of the acetyl coenzyme A carboxylase (ACC) complex. First, biotin carboxylase catalyzes the carboxylation of biotin on its carrier protein (BCCP) and then the CO(2) group is transferred by the carboxyltransferase to acetyl-CoA to form malonyl-CoA. This is Acetyl-coenzyme A carboxylase carboxyl transferase subunit alpha from Cereibacter sphaeroides (strain ATCC 17029 / ATH 2.4.9) (Rhodobacter sphaeroides).